A 361-amino-acid chain; its full sequence is DNA replication and repair protein RecF (361 aa).

30–37 (GDNAQGKT) provides a ligand contact to ATP.

This sequence belongs to the RecF family.

It is found in the cytoplasm. In terms of biological role, the RecF protein is involved in DNA metabolism; it is required for DNA replication and normal SOS inducibility. RecF binds preferentially to single-stranded, linear DNA. It also seems to bind ATP. This is DNA replication and repair protein RecF from Clostridium botulinum (strain Alaska E43 / Type E3).